The sequence spans 328 residues: DNA-directed RNA polymerase subunit alpha (328 aa).

The alpha N-terminal domain (alpha-NTD) stretch occupies residues 1 to 230 (MIQITGRKFK…IILDHFMFIE (230 aa)). An alpha C-terminal domain (alpha-CTD) region spans residues 257–328 (PEDVMSKKVE…FGLSLRKGDK (72 aa)).

It belongs to the RNA polymerase alpha chain family. As to quaternary structure, homodimer. The RNAP catalytic core consists of 2 alpha, 1 beta, 1 beta' and 1 omega subunit. When a sigma factor is associated with the core the holoenzyme is formed, which can initiate transcription.

The catalysed reaction is RNA(n) + a ribonucleoside 5'-triphosphate = RNA(n+1) + diphosphate. Its function is as follows. DNA-dependent RNA polymerase catalyzes the transcription of DNA into RNA using the four ribonucleoside triphosphates as substrates. The protein is DNA-directed RNA polymerase subunit alpha of Fervidobacterium nodosum (strain ATCC 35602 / DSM 5306 / Rt17-B1).